The sequence spans 103 residues: Serine protease inhibitor 4 (103 aa).

Cys56 and Cys73 are joined by a disulfide.

Belongs to the protease inhibitor I3 (leguminous Kunitz-type inhibitor) family.

The protein localises to the vacuole. In terms of biological role, inhibitor of serine protease. May protect the plant by inhibiting proteases of invading organisms. This is Serine protease inhibitor 4 from Solanum tuberosum (Potato).